The chain runs to 240 residues: 1-(5-phosphoribosyl)-5-[(5-phosphoribosylamino)methylideneamino] imidazole-4-carboxamide isomerase (240 aa).

Aspartate 8 serves as the catalytic Proton acceptor. The Proton donor role is filled by aspartate 130.

It belongs to the HisA/HisF family.

It is found in the cytoplasm. It catalyses the reaction 1-(5-phospho-beta-D-ribosyl)-5-[(5-phospho-beta-D-ribosylamino)methylideneamino]imidazole-4-carboxamide = 5-[(5-phospho-1-deoxy-D-ribulos-1-ylimino)methylamino]-1-(5-phospho-beta-D-ribosyl)imidazole-4-carboxamide. It participates in amino-acid biosynthesis; L-histidine biosynthesis; L-histidine from 5-phospho-alpha-D-ribose 1-diphosphate: step 4/9. The polypeptide is 1-(5-phosphoribosyl)-5-[(5-phosphoribosylamino)methylideneamino] imidazole-4-carboxamide isomerase (Elusimicrobium minutum (strain Pei191)).